A 249-amino-acid polypeptide reads, in one-letter code: Flagellar L-ring protein (249 aa).

A signal peptide spans 1-25; that stretch reads MSRLRTSHALRTAAALVAVGCLASG. Cys-26 carries the N-palmitoyl cysteine lipid modification. Residue Cys-26 is the site of S-diacylglycerol cysteine attachment.

Belongs to the FlgH family. In terms of assembly, the basal body constitutes a major portion of the flagellar organelle and consists of four rings (L,P,S, and M) mounted on a central rod.

Its subcellular location is the cell outer membrane. It is found in the bacterial flagellum basal body. In terms of biological role, assembles around the rod to form the L-ring and probably protects the motor/basal body from shearing forces during rotation. The chain is Flagellar L-ring protein from Afipia carboxidovorans (strain ATCC 49405 / DSM 1227 / KCTC 32145 / OM5) (Oligotropha carboxidovorans).